Consider the following 34-residue polypeptide: Cytochrome b6-f complex subunit 8 (34 aa).

The helical transmembrane segment at 3-23 (IFQIGWAALAAIFTFSIAMVV) threads the bilayer.

This sequence belongs to the PetN family. In terms of assembly, the 4 large subunits of the cytochrome b6-f complex are cytochrome b6, subunit IV (17 kDa polypeptide, PetD), cytochrome f and the Rieske protein, while the 4 small subunits are PetG, PetL, PetM and PetN. The complex functions as a dimer.

Its subcellular location is the cellular thylakoid membrane. In terms of biological role, component of the cytochrome b6-f complex, which mediates electron transfer between photosystem II (PSII) and photosystem I (PSI), cyclic electron flow around PSI, and state transitions. The polypeptide is Cytochrome b6-f complex subunit 8 (Prochlorococcus marinus subsp. pastoris (strain CCMP1986 / NIES-2087 / MED4)).